We begin with the raw amino-acid sequence, 276 residues long: S-adenosylmethionine decarboxylase proenzyme (276 aa).

Ser-124 acts as the Schiff-base intermediate with substrate; via pyruvic acid in catalysis. A Pyruvic acid (Ser); by autocatalysis modification is found at Ser-124. His-129 functions as the Proton acceptor; for processing activity in the catalytic mechanism. Residue Cys-152 is the Proton donor; for catalytic activity of the active site.

Belongs to the prokaryotic AdoMetDC family. Type 2 subfamily. In terms of assembly, heterooctamer of four alpha and four beta chains arranged as a tetramer of alpha/beta heterodimers. Requires pyruvate as cofactor. Post-translationally, is synthesized initially as an inactive proenzyme. Formation of the active enzyme involves a self-maturation process in which the active site pyruvoyl group is generated from an internal serine residue via an autocatalytic post-translational modification. Two non-identical subunits are generated from the proenzyme in this reaction, and the pyruvate is formed at the N-terminus of the alpha chain, which is derived from the carboxyl end of the proenzyme. The post-translation cleavage follows an unusual pathway, termed non-hydrolytic serinolysis, in which the side chain hydroxyl group of the serine supplies its oxygen atom to form the C-terminus of the beta chain, while the remainder of the serine residue undergoes an oxidative deamination to produce ammonia and the pyruvoyl group blocking the N-terminus of the alpha chain.

The catalysed reaction is S-adenosyl-L-methionine + H(+) = S-adenosyl 3-(methylsulfanyl)propylamine + CO2. Its pathway is amine and polyamine biosynthesis; S-adenosylmethioninamine biosynthesis; S-adenosylmethioninamine from S-adenosyl-L-methionine: step 1/1. Functionally, catalyzes the decarboxylation of S-adenosylmethionine to S-adenosylmethioninamine (dcAdoMet), the propylamine donor required for the synthesis of the polyamines spermine and spermidine from the diamine putrescine. The protein is S-adenosylmethionine decarboxylase proenzyme of Desulfitobacterium hafniense (strain DSM 10664 / DCB-2).